A 237-amino-acid chain; its full sequence is 1-(5-phosphoribosyl)-5-[(5-phosphoribosylamino)methylideneamino] imidazole-4-carboxamide isomerase (237 aa).

Asp8 serves as the catalytic Proton acceptor. Asp129 acts as the Proton donor in catalysis.

This sequence belongs to the HisA/HisF family.

The protein localises to the cytoplasm. The catalysed reaction is 1-(5-phospho-beta-D-ribosyl)-5-[(5-phospho-beta-D-ribosylamino)methylideneamino]imidazole-4-carboxamide = 5-[(5-phospho-1-deoxy-D-ribulos-1-ylimino)methylamino]-1-(5-phospho-beta-D-ribosyl)imidazole-4-carboxamide. It functions in the pathway amino-acid biosynthesis; L-histidine biosynthesis; L-histidine from 5-phospho-alpha-D-ribose 1-diphosphate: step 4/9. In Roseiflexus sp. (strain RS-1), this protein is 1-(5-phosphoribosyl)-5-[(5-phosphoribosylamino)methylideneamino] imidazole-4-carboxamide isomerase.